Here is a 620-residue protein sequence, read N- to C-terminus: Chaperone protein HscA homolog (620 aa).

The protein belongs to the heat shock protein 70 family.

Chaperone involved in the maturation of iron-sulfur cluster-containing proteins. Has a low intrinsic ATPase activity which is markedly stimulated by HscB. The chain is Chaperone protein HscA homolog from Neisseria meningitidis serogroup B (strain ATCC BAA-335 / MC58).